The primary structure comprises 118 residues: Na(+)/H(+) antiporter subunit G1 (118 aa).

Helical transmembrane passes span 9–29 (IALI…IGIL), 41–61 (AGKA…LFFI), and 70–90 (QLIV…HLII).

It belongs to the CPA3 antiporters (TC 2.A.63) subunit G family. As to quaternary structure, may form a heterooligomeric complex that consists of seven subunits: mnhA1, mnhB1, mnhC1, mnhD1, mnhE1, mnhF1 and mnhG1.

It is found in the cell membrane. Mnh complex is a Na(+)/H(+) antiporter involved in Na(+) excretion. This is Na(+)/H(+) antiporter subunit G1 (mnhG1) from Staphylococcus saprophyticus subsp. saprophyticus (strain ATCC 15305 / DSM 20229 / NCIMB 8711 / NCTC 7292 / S-41).